Consider the following 206-residue polypeptide: Urease accessory protein UreG (206 aa).

G13–T20 is a binding site for GTP.

This sequence belongs to the SIMIBI class G3E GTPase family. UreG subfamily. In terms of assembly, homodimer. UreD, UreF and UreG form a complex that acts as a GTP-hydrolysis-dependent molecular chaperone, activating the urease apoprotein by helping to assemble the nickel containing metallocenter of UreC. The UreE protein probably delivers the nickel.

It is found in the cytoplasm. Its function is as follows. Facilitates the functional incorporation of the urease nickel metallocenter. This process requires GTP hydrolysis, probably effectuated by UreG. The chain is Urease accessory protein UreG from Haloquadratum walsbyi (strain DSM 16790 / HBSQ001).